The following is a 234-amino-acid chain: Putative gustatory receptor clone PTE38 (234 aa).

Residues 1–11 (MYLFFSNLSFN) form a helical membrane-spanning segment. At 12–42 (DICIITTTIPKMLMNVQSHDQSITYLGCLSQ) the chain is on the extracellular side. Cys-39 and Cys-121 are disulfide-bonded. Residues 43-62 (VYLIVNFGSIESCLLAVMAY) traverse the membrane as a helical segment. The Cytoplasmic portion of the chain corresponds to 63 to 84 (DRYVAICHPLKYTVIMNHYFCV). Residues 85 to 105 (MLLLFACSLALHMCLFHILMV) form a helical membrane-spanning segment. The Extracellular segment spans residues 106–138 (LILTFCTKTEIPHFFCELAHIIKLTCSDNFINY). The helical transmembrane segment at 139 to 160 (LLIYTVSVLFFGVHIVGIILSY) threads the bilayer. The Cytoplasmic segment spans residues 161-182 (IYTVSSVLRMSLLGGMYKAFST). The chain crosses the membrane as a helical span at residues 183–202 (CGSHLSVVSLFYGTGFGVHI). At 203–212 (SSPLTDSPRK) the chain is on the extracellular side. The chain crosses the membrane as a helical span at residues 213-234 (TVVASVMYTVVTQMHGPFIYSL).

It belongs to the G-protein coupled receptor 1 family. Tongue specific.

The protein resides in the cell membrane. In terms of biological role, possible taste receptor. The polypeptide is Putative gustatory receptor clone PTE38 (Rattus norvegicus (Rat)).